The chain runs to 409 residues: Mitochondrial import inner membrane translocase subunit TIM50-B (409 aa).

Residues 1–42 (MSLIAIERVLCGWPKICRKLIVTSRSLTSGLRRALVKQPRKG) constitute a mitochondrion transit peptide. The Mitochondrial matrix portion of the chain corresponds to 43-127 (GDVGKPGMEL…ELERAFRRMK (85 aa)). The disordered stretch occupies residues 93–114 (PQTSEESNDEESRERRKLEEEE). Positions 102 to 111 (EESRERRKLE) are enriched in basic and acidic residues. Residues 128-148 (LGFGLFGIGSMLFSFWAIYFY) traverse the membrane as a helical segment. Topologically, residues 149 to 409 (GRPSLDEHGN…KNWTRGFINH (261 aa)) are mitochondrial intermembrane. The 144-residue stretch at 205-348 (YVQPPYTLVL…FELTSFLSVL (144 aa)) folds into the FCP1 homology domain.

Belongs to the TIM50 family. Component of the TIM23 complex at least composed of Tim23, Tim17 (Tim17a1, Tim17a2 or Tim17b1) and a Tim50. In terms of tissue distribution, exclusively expressed in the testis.

Its subcellular location is the mitochondrion inner membrane. Essential component of the TIM23 complex, a complex that mediates the translocation of transit peptide-containing proteins across the mitochondrial inner membrane. This Drosophila melanogaster (Fruit fly) protein is Mitochondrial import inner membrane translocase subunit TIM50-B (ttm2).